A 96-amino-acid polypeptide reads, in one-letter code: Ribonuclease P protein component 1 (96 aa).

This sequence belongs to the eukaryotic/archaeal RNase P protein component 1 family. In terms of assembly, consists of a catalytic RNA component and at least 4-5 protein subunits.

It localises to the cytoplasm. It catalyses the reaction Endonucleolytic cleavage of RNA, removing 5'-extranucleotides from tRNA precursor.. Part of ribonuclease P, a protein complex that generates mature tRNA molecules by cleaving their 5'-ends. The polypeptide is Ribonuclease P protein component 1 (Methanococcus aeolicus (strain ATCC BAA-1280 / DSM 17508 / OCM 812 / Nankai-3)).